Reading from the N-terminus, the 539-residue chain is Eukaryotic translation initiation factor 3 subunit L (539 aa).

A PCI domain is found at 306–514; it reads TFSDILLYIQ…IHIADTKVSH (209 aa).

The protein belongs to the eIF-3 subunit L family. Component of the eukaryotic translation initiation factor 3 (eIF-3) complex. The eIF-3 complex interacts with pix.

It is found in the cytoplasm. Functionally, component of the eukaryotic translation initiation factor 3 (eIF-3) complex, which is involved in protein synthesis of a specialized repertoire of mRNAs and, together with other initiation factors, stimulates binding of mRNA and methionyl-tRNAi to the 40S ribosome. The eIF-3 complex specifically targets and initiates translation of a subset of mRNAs involved in cell proliferation. This chain is Eukaryotic translation initiation factor 3 subunit L, found in Drosophila ananassae (Fruit fly).